Reading from the N-terminus, the 254-residue chain is MKIGVYGASGRIGKLLLEELKGGYKGLELSSVFVRQKCETDFSAFSHAPLVTNDLKAFVRACECVIDFSLPKGLDHLLEALLECPKILVSGTTGLEKETLEKMQQLALKAPLLHAHNMSIGIMMLNQLAFLASLKLKDADIEIVETHHNLKKDAPSGTALSLYETCAKARGYDEKNALTTHREGLRSKESIGIAAVRGGDVAGKHTIGFYLEGEYIELSHTATNRSIFAKGALEAALWLKDKTAKKYEINEMFG.

7 to 12 (GASGRI) is a binding site for NAD(+). An NADP(+)-binding site is contributed by Arg-35. Residues 91–93 (GTT) and 115–118 (AHNM) each bind NAD(+). His-147 serves as the catalytic Proton donor/acceptor. Position 148 (His-148) interacts with (S)-2,3,4,5-tetrahydrodipicolinate. Lys-151 functions as the Proton donor in the catalytic mechanism. 157-158 (GT) is a binding site for (S)-2,3,4,5-tetrahydrodipicolinate.

This sequence belongs to the DapB family.

It is found in the cytoplasm. It catalyses the reaction (S)-2,3,4,5-tetrahydrodipicolinate + NAD(+) + H2O = (2S,4S)-4-hydroxy-2,3,4,5-tetrahydrodipicolinate + NADH + H(+). The catalysed reaction is (S)-2,3,4,5-tetrahydrodipicolinate + NADP(+) + H2O = (2S,4S)-4-hydroxy-2,3,4,5-tetrahydrodipicolinate + NADPH + H(+). Its pathway is amino-acid biosynthesis; L-lysine biosynthesis via DAP pathway; (S)-tetrahydrodipicolinate from L-aspartate: step 4/4. Catalyzes the conversion of 4-hydroxy-tetrahydrodipicolinate (HTPA) to tetrahydrodipicolinate. The protein is 4-hydroxy-tetrahydrodipicolinate reductase of Helicobacter pylori (strain P12).